A 156-amino-acid polypeptide reads, in one-letter code: Peptidyl-prolyl cis-trans isomerase cypE (156 aa).

In terms of domain architecture, PPIase cyclophilin-type spans 2–155 (TEQTVTLQTT…DEIRIIKATA (154 aa)).

Belongs to the cyclophilin-type PPIase family. Interacts with snwA.

It localises to the cytoplasm. The protein resides in the nucleus. It catalyses the reaction [protein]-peptidylproline (omega=180) = [protein]-peptidylproline (omega=0). Functionally, catalyzes the cis-trans isomerization of proline imidic peptide bonds in oligopeptides. Plays a role in protein folding, transport and assembly. The chain is Peptidyl-prolyl cis-trans isomerase cypE (cypE) from Dictyostelium discoideum (Social amoeba).